The chain runs to 486 residues: V-type proton ATPase subunit B1 (486 aa).

Residue Gly2 is modified to N-acetylglycine.

It belongs to the ATPase alpha/beta chains family. In terms of assembly, V-ATPase is a heteromultimeric enzyme composed of a peripheral catalytic V1 complex (components A to H) attached to an integral membrane V0 proton pore complex (components: a, c, c'', d and e).

The protein resides in the vacuole membrane. In terms of biological role, non-catalytic subunit of the peripheral V1 complex of vacuolar ATPase. V-ATPase is responsible for acidifying a variety of intracellular compartments in eukaryotic cells. This is V-type proton ATPase subunit B1 (VHA-B1) from Arabidopsis thaliana (Mouse-ear cress).